We begin with the raw amino-acid sequence, 269 residues long: Extracellular metalloprotease UREG_07765 (269 aa).

The signal sequence occupies residues 1–18 (MRLSVSLLALAFGSLVAA). A glycan (N-linked (GlcNAc...) asparagine) is linked at asparagine 179. Residue histidine 191 coordinates Zn(2+). The active site involves glutamate 192. Position 195 (histidine 195) interacts with Zn(2+). The disordered stretch occupies residues 207-227 (VSDTPPQRSSTQGCPSSRDSC). Polar residues predominate over residues 210-225 (TPPQRSSTQGCPSSRD). An intrachain disulfide couples cysteine 220 to cysteine 246.

The protein belongs to the peptidase M43B family.

Its subcellular location is the secreted. Secreted metalloproteinase that allows assimilation of proteinaceous substrates. The polypeptide is Extracellular metalloprotease UREG_07765 (Uncinocarpus reesii (strain UAMH 1704)).